The primary structure comprises 258 residues: Ribosomal RNA small subunit methyltransferase A (258 aa).

The S-adenosyl-L-methionine site is built by H13, L15, G40, E61, D86, and N106.

This sequence belongs to the class I-like SAM-binding methyltransferase superfamily. rRNA adenine N(6)-methyltransferase family. RsmA subfamily.

It is found in the cytoplasm. The enzyme catalyses adenosine(1518)/adenosine(1519) in 16S rRNA + 4 S-adenosyl-L-methionine = N(6)-dimethyladenosine(1518)/N(6)-dimethyladenosine(1519) in 16S rRNA + 4 S-adenosyl-L-homocysteine + 4 H(+). Its function is as follows. Specifically dimethylates two adjacent adenosines (A1518 and A1519) in the loop of a conserved hairpin near the 3'-end of 16S rRNA in the 30S particle. May play a critical role in biogenesis of 30S subunits. In Coxiella burnetii (strain CbuG_Q212) (Coxiella burnetii (strain Q212)), this protein is Ribosomal RNA small subunit methyltransferase A.